The sequence spans 721 residues: Polyribonucleotide nucleotidyltransferase (721 aa).

Positions 487 and 493 each coordinate Mg(2+). The 60-residue stretch at 554–613 (PRIETFKIPTDKIREVIGTGGKVIREIVEKTGAKVNIDDDGTVKVASSDGESIKAAIKWI) folds into the KH domain. Residues 623–691 (NAIYDGTVVK…DRGKTRLSMK (69 aa)) form the S1 motif domain. Residues 697–721 (TGEDLEAKQKAEAEKAKAEGAPAAE) are disordered. Residues 701-714 (LEAKQKAEAEKAKA) are compositionally biased toward basic and acidic residues.

Belongs to the polyribonucleotide nucleotidyltransferase family. Mg(2+) serves as cofactor.

The protein localises to the cytoplasm. The enzyme catalyses RNA(n+1) + phosphate = RNA(n) + a ribonucleoside 5'-diphosphate. In terms of biological role, involved in mRNA degradation. Catalyzes the phosphorolysis of single-stranded polyribonucleotides processively in the 3'- to 5'-direction. The polypeptide is Polyribonucleotide nucleotidyltransferase (Rhodopseudomonas palustris (strain BisA53)).